Consider the following 121-residue polypeptide: MIGIDIIKISRMGALLERFGSKAMGRFLSKDEIELVKNHKTASGFWAAKEACSKALGVGIGAECGFHDITIFKSSNGAPNIRLSQKIVKEFNVKSISLSITHDGEYAIAVVTIESTAANKI.

Residues Asp-5 and Glu-50 each coordinate Mg(2+).

It belongs to the P-Pant transferase superfamily. AcpS family. The cofactor is Mg(2+).

The protein localises to the cytoplasm. It catalyses the reaction apo-[ACP] + CoA = holo-[ACP] + adenosine 3',5'-bisphosphate + H(+). Functionally, transfers the 4'-phosphopantetheine moiety from coenzyme A to a Ser of acyl-carrier-protein. The chain is Holo-[acyl-carrier-protein] synthase from Sulfurimonas denitrificans (strain ATCC 33889 / DSM 1251) (Thiomicrospira denitrificans (strain ATCC 33889 / DSM 1251)).